A 461-amino-acid polypeptide reads, in one-letter code: L-seryl-tRNA(Sec) selenium transferase (461 aa).

Lysine 294 is modified (N6-(pyridoxal phosphate)lysine).

It belongs to the SelA family. It depends on pyridoxal 5'-phosphate as a cofactor.

The protein localises to the cytoplasm. It catalyses the reaction L-seryl-tRNA(Sec) + selenophosphate + H(+) = L-selenocysteinyl-tRNA(Sec) + phosphate. It participates in aminoacyl-tRNA biosynthesis; selenocysteinyl-tRNA(Sec) biosynthesis; selenocysteinyl-tRNA(Sec) from L-seryl-tRNA(Sec) (bacterial route): step 1/1. Its function is as follows. Converts seryl-tRNA(Sec) to selenocysteinyl-tRNA(Sec) required for selenoprotein biosynthesis. In Haemophilus influenzae (strain ATCC 51907 / DSM 11121 / KW20 / Rd), this protein is L-seryl-tRNA(Sec) selenium transferase.